The sequence spans 117 residues: MRSNNSSLVHCCWVSPPSLTRLPAFPSPRILSPCYCYNKRIRPFRGLTSYRQASYSLGFPLGLLVFLHSLIVARFFVASKSRSCIVRSLLFWINLDSADSRISVLFQCFFCIDIWTV.

A helical membrane pass occupies residues 57–77; sequence LGFPLGLLVFLHSLIVARFFV.

It localises to the membrane. This is an uncharacterized protein from Schizosaccharomyces pombe (strain 972 / ATCC 24843) (Fission yeast).